The following is a 480-amino-acid chain: Uridine 5'-monophosphate synthase (480 aa).

An N-acetylalanine modification is found at alanine 2. The OPRTase stretch occupies residues 2–214 (AVARAALGPL…VFVAANHNGS (213 aa)). Tyrosine 37 is subject to Phosphotyrosine. Residue serine 214 is modified to Phosphoserine. The interval 215-220 (PLSIKE) is domain linker. Residues 221–480 (APKELSFGAR…WEAYLSRLGV (260 aa)) form an OMPdecase region. Serine 257 contributes to the orotidine 5'-phosphate binding site. UMP is bound by residues serine 257, aspartate 259, and 281-283 (KTH). Lysine 281 is a binding site for orotidine 5'-phosphate. Active-site for OMPdecase activity residues include aspartate 312, lysine 314, and aspartate 317. Residues lysine 314, aspartate 317, threonine 321, serine 372, 430–432 (QQY), and 450–451 (GR) each bind orotidine 5'-phosphate. UMP-binding positions include aspartate 317, threonine 321, serine 372, 430-432 (QQY), and 450-451 (GR).

In the N-terminal section; belongs to the purine/pyrimidine phosphoribosyltransferase family. This sequence in the C-terminal section; belongs to the OMP decarboxylase family. In terms of assembly, homodimer; dimerization is required for enzymatic activity.

It carries out the reaction orotidine 5'-phosphate + diphosphate = orotate + 5-phospho-alpha-D-ribose 1-diphosphate. It catalyses the reaction orotidine 5'-phosphate + H(+) = UMP + CO2. Its pathway is pyrimidine metabolism; UMP biosynthesis via de novo pathway; UMP from orotate: step 1/2. The protein operates within pyrimidine metabolism; UMP biosynthesis via de novo pathway; UMP from orotate: step 2/2. In terms of biological role, bifunctional enzyme catalyzing the last two steps of de novo pyrimidine biosynthesis, orotate phosphoribosyltransferase (OPRT), which converts orotate to orotidine-5'-monophosphate (OMP), and orotidine-5'-monophosphate decarboxylase (ODC), the terminal enzymatic reaction that decarboxylates OMP to uridine monophosphate (UMP). This is Uridine 5'-monophosphate synthase from Homo sapiens (Human).